We begin with the raw amino-acid sequence, 298 residues long: Chitin deacetylase (298 aa).

Positions 1-16 (MLAPLFAALLAGAATA) are cleaved as a signal peptide. Positions 39-222 (NTFALTFDDG…AIKAKGLTPV (184 aa)) constitute a NodB homology domain. The active-site Proton acceptor is D46. D46 contributes to the acetate binding site. Co(2+) contacts are provided by D47, H99, and H103. Acetate is bound at residue Y140. The active-site Proton donor is H196. One can recognise a Chitin-binding type-1 domain in the interval 256–298 (DDTCGGSNGYVCQNSQCCSQWGWCGTTSEYCAAGCQAAYGPCT). Intrachain disulfides connect C259/C273, C267/C279, C272/C286, and C290/C297.

Belongs to the polysaccharide deacetylase family. Co(2+) serves as cofactor.

It is found in the secreted. The catalysed reaction is [(1-&gt;4)-N-acetyl-beta-D-glucosaminyl](n) + n H2O = chitosan + n acetate. Inhibited by Fe(2+) and to a lesser extent by Mn(2+). Its function is as follows. Hydrolyzes the N-acetamido groups of N-acetyl-D-glucosamine polymers in chitin to form chitosan and acetate. May play a role in evasion of the host immune response; plant chitinases liberate chitin molecules from the fungal cell wall which act as elicitors of the plant immune response, deacetylation of the liberated chitin neutralizes elicitor activity. The polypeptide is Chitin deacetylase (Pestalotiopsis sp).